A 405-amino-acid polypeptide reads, in one-letter code: Phosphopentomutase (405 aa).

The Mn(2+) site is built by D10, D303, H308, D344, H345, and H356.

Belongs to the phosphopentomutase family. Mn(2+) serves as cofactor.

The protein resides in the cytoplasm. The catalysed reaction is 2-deoxy-alpha-D-ribose 1-phosphate = 2-deoxy-D-ribose 5-phosphate. It catalyses the reaction alpha-D-ribose 1-phosphate = D-ribose 5-phosphate. It functions in the pathway carbohydrate degradation; 2-deoxy-D-ribose 1-phosphate degradation; D-glyceraldehyde 3-phosphate and acetaldehyde from 2-deoxy-alpha-D-ribose 1-phosphate: step 1/2. In terms of biological role, isomerase that catalyzes the conversion of deoxy-ribose 1-phosphate (dRib-1-P) and ribose 1-phosphate (Rib-1-P) to deoxy-ribose 5-phosphate (dRib-5-P) and ribose 5-phosphate (Rib-5-P), respectively. The chain is Phosphopentomutase from Shewanella woodyi (strain ATCC 51908 / MS32).